Here is a 270-residue protein sequence, read N- to C-terminus: Formamidopyrimidine-DNA glycosylase (270 aa).

Residue Pro2 is the Schiff-base intermediate with DNA of the active site. Glu3 (proton donor) is an active-site residue. The active-site Proton donor; for beta-elimination activity is Lys57. DNA contacts are provided by His90, Arg109, and Lys150. Residues 235–269 (LVYGNKDKPCPRCGTKIKSIIIGQRNSFFCPQCQK) form an FPG-type zinc finger. Residue Arg259 is the Proton donor; for delta-elimination activity of the active site.

Belongs to the FPG family. In terms of assembly, monomer. Requires Zn(2+) as cofactor.

The catalysed reaction is Hydrolysis of DNA containing ring-opened 7-methylguanine residues, releasing 2,6-diamino-4-hydroxy-5-(N-methyl)formamidopyrimidine.. The enzyme catalyses 2'-deoxyribonucleotide-(2'-deoxyribose 5'-phosphate)-2'-deoxyribonucleotide-DNA = a 3'-end 2'-deoxyribonucleotide-(2,3-dehydro-2,3-deoxyribose 5'-phosphate)-DNA + a 5'-end 5'-phospho-2'-deoxyribonucleoside-DNA + H(+). Its function is as follows. Involved in base excision repair of DNA damaged by oxidation or by mutagenic agents. Acts as a DNA glycosylase that recognizes and removes damaged bases. Has a preference for oxidized purines, such as 7,8-dihydro-8-oxoguanine (8-oxoG). Has AP (apurinic/apyrimidinic) lyase activity and introduces nicks in the DNA strand. Cleaves the DNA backbone by beta-delta elimination to generate a single-strand break at the site of the removed base with both 3'- and 5'-phosphates. This Histophilus somni (strain 129Pt) (Haemophilus somnus) protein is Formamidopyrimidine-DNA glycosylase.